We begin with the raw amino-acid sequence, 122 residues long: MAPKKAPAAAAEKKVKKAPTTEKKNKKKRSETFAIYIFKVLKQVHPDVGISKKAMNIMNSFINDSFERIALESSKLVRFNKRRTLSSREVQTAVKLLLPGELARHAISEGTKAVTKFSSSTN.

Over residues 1–10 the composition is skewed to low complexity; it reads MAPKKAPAAA. A disordered region spans residues 1–28; it reads MAPKKAPAAAAEKKVKKAPTTEKKNKKK. N,N,N-trimethylalanine is present on Ala-2. Residues Lys-5 and Lys-42 each carry the N6-acetyllysine modification. Lys-116 participates in a covalent cross-link: Glycyl lysine isopeptide (Lys-Gly) (interchain with G-Cter in ubiquitin).

It belongs to the histone H2B family. As to quaternary structure, the nucleosome is a histone octamer containing two molecules each of H2A, H2B, H3 and H4 assembled in one H3-H4 heterotetramer and two H2A-H2B heterodimers. The octamer wraps approximately 147 bp of DNA. In terms of processing, acetylation occurs almost exclusively in the MAC. Post-translationally, monoubiquitination to form H2BK115ub1 gives a specific tag for epigenetic transcriptional activation and is also prerequisite for H3K4me and H3K79me formation.

It localises to the nucleus. It is found in the chromosome. Its function is as follows. Core component of nucleosome. Nucleosomes wrap and compact DNA into chromatin, limiting DNA accessibility to the cellular machineries which require DNA as a template. Histones thereby play a central role in transcription regulation, DNA repair, DNA replication and chromosomal stability. DNA accessibility is regulated via a complex set of post-translational modifications of histones, also called histone code, and nucleosome remodeling. This is Histone H2B.1 (HTB1) from Tetrahymena thermophila (strain SB210).